The primary structure comprises 51 residues: Large ribosomal subunit protein eL39 (51 aa).

The protein belongs to the eukaryotic ribosomal protein eL39 family.

The polypeptide is Large ribosomal subunit protein eL39 (Saccharolobus islandicus (strain L.S.2.15 / Lassen #1) (Sulfolobus islandicus)).